A 713-amino-acid chain; its full sequence is MSANKELQQGYSDYSAASDQAALLNRLITAMQKGELTDELLEHIPELGDAKKLNDKLKYRKSILEKSIAEQAAKNKKNGVKATSTSSPSSSTSAPAEKKAKKDGKTGGAPPKQAKKVDYVTVEDYGSSIFGRLQSLFKKAIEDAFPGLDVPLLLAETPNPQFGDYQCNSAMPIAAKLKANKINKRPGDVAKEIQAKLPTKIDFVEKIDVMPAGFINIFLNTDYLRRQISLLASEGVKLPKLTRKRVLVDFSSPNIAKEMHVGHLRSTIIGDSICRLFEAVGFDVLRVNHIGDWGTQFGMLIAHLYDRFPDFLKKLPDISDLQAFYKESKKRFDEDEQFKKRAYEYVVKLQSHDGDIVKAWNTICDVSKKYNQIVYNYLDIKIKDVGESFYQDKMIELVKWVKTNKPDMLREEDGRQIMFPTGCDIPLTVVKSDGGFTYDTSDLAALKYRMLEEKCDWNIYVVDSGQSLHLETVYAAGRDFGWYDESIQRVEHVAFGLVLGDDKKKFKTRSGETVRLLDLLSEGVKRATEKLIEKGRETAMSEEQLVAARDAVAFGCVKYADLSHTRTQDYVFSFDRMLEDRGNTAVYLLYAYTRIQSIFEKDEVKNVDLVKYIASTPTLPLDHPGEFKLAKQLLKLSDCVLLVLDSLMLHQMCDYVYQLATLFHDFYNECYVIENKEGEKPFVHMHRLALCDVTRKVMSTCFKILGLREVNKM.

A disordered region spans residues 74 to 113 (KNKKNGVKATSTSSPSSSTSAPAEKKAKKDGKTGGAPPKQ). Residues 81–95 (KATSTSSPSSSTSAP) are compositionally biased toward low complexity. Residues 96–105 (AEKKAKKDGK) are compositionally biased toward basic and acidic residues. L-arginine is bound by residues 252 to 254 (SPN), histidine 263, tyrosine 438, aspartate 442, and glutamine 466. A 'HIGH' region motif is present at residues 252–263 (SPNIAKEMHVGH). The interval 583–597 (NTAVYLLYAYTRIQS) is interaction with tRNA.

Belongs to the class-I aminoacyl-tRNA synthetase family.

It is found in the cytoplasm. The protein resides in the cytosol. The catalysed reaction is tRNA(Arg) + L-arginine + ATP = L-arginyl-tRNA(Arg) + AMP + diphosphate. In terms of biological role, forms part of a macromolecular complex that catalyzes the attachment of specific amino acids to cognate tRNAs during protein synthesis. This Caenorhabditis elegans protein is Probable arginine--tRNA ligase, cytoplasmic.